Reading from the N-terminus, the 373-residue chain is Valienol-1-phosphate guanylyltransferase (373 aa).

Substrate contacts are provided by residues G177 and 192–193 (EK).

Belongs to the bacterial/plant glucose-1-phosphate adenylyltransferase family. Requires Mg(2+) as cofactor.

It catalyses the reaction valienol 1-phosphate + GTP + H(+) = GDP-valienol + diphosphate. Its function is as follows. Involved in the biosynthesis of the antifungal agent validamycin A. Catalyzes the conversion of valienol 1-phosphate to GDP-valienol and less effectively to ADP-valienol or other NDP derivatives. This Streptomyces hygroscopicus subsp. limoneus protein is Valienol-1-phosphate guanylyltransferase.